We begin with the raw amino-acid sequence, 231 residues long: GDSL lipase Rv0518 (231 aa).

Positions 1–20 (MSRPGTYVIGLTLLVGLVVG) are cleaved as a signal peptide. Residue S46 is the Nucleophile of the active site. D205 (proton donor) is an active-site residue. The Proton acceptor role is filled by H208.

This sequence belongs to the 'GDSL' lipolytic enzyme family.

The protein resides in the secreted. It localises to the cell wall. It is found in the extracellular space. It carries out the reaction a fatty acid ester + H2O = an aliphatic alcohol + a fatty acid + H(+). The enzyme catalyses decanoate ester + H2O = decanoate + an aliphatic alcohol + H(+). It catalyses the reaction an octanoate ester + H2O = an aliphatic alcohol + octanoate + H(+). The catalysed reaction is a dodecanoate ester + H2O = an aliphatic alcohol + dodecanoate + H(+). It carries out the reaction a tetradecanoate ester + H2O = an aliphatic alcohol + tetradecanoate + H(+). With respect to regulation, activity is inhibited by the serine modifier phenylmethylsulfonyl fluoride (PMSF). GDSL lipase that catalyzes the hydrolysis of p-nitrophenyl (pNP) esters. pNP-decanoate (C10) is the preferred substrate. It can also use pNP-octanoate (C8), pNP-dodecanoate (C12) and pNP-tetradecanoate (C14). Has lower activity with pNP-butyrate (C4), pNP-palmitate (C16) and pNP-stearate (C18). Does not show phospholipase A1 activity. Might help bacteria to utilize available lipids for its growth as well as provide resistance to various intracellular stresses by cell wall modulation resulting in enhanced intracellular survival. This chain is GDSL lipase Rv0518, found in Mycobacterium tuberculosis (strain ATCC 25618 / H37Rv).